The primary structure comprises 463 residues: Cysteine--tRNA ligase (463 aa).

Residue C29 participates in Zn(2+) binding. The 'HIGH' region signature appears at 31-41 (MTIYDLCHIGH). Zn(2+)-binding residues include C218, H243, and E247. A 'KMSKS' region motif is present at residues 275–279 (KMSKS). K278 contacts ATP.

Belongs to the class-I aminoacyl-tRNA synthetase family. Monomer. Requires Zn(2+) as cofactor.

It localises to the cytoplasm. It carries out the reaction tRNA(Cys) + L-cysteine + ATP = L-cysteinyl-tRNA(Cys) + AMP + diphosphate. The sequence is that of Cysteine--tRNA ligase from Polaromonas naphthalenivorans (strain CJ2).